Consider the following 696-residue polypeptide: Macrolide export ATP-binding/permease protein MacB (696 aa).

One can recognise an ABC transporter domain in the interval 6–244 (IELKNIERYH…KPQNKRTFID (239 aa)). 42–49 (GASGSGKS) lines the ATP pocket. The tract at residues 254 to 287 (HNTEKLNRPNEKNNIDNDNKENNNGYNRNDNSFL) is disordered. A compositionally biased stretch (basic and acidic residues) spans 255–274 (NTEKLNRPNEKNNIDNDNKE). Residues 275–284 (NNNGYNRNDN) show a composition bias toward low complexity. 4 consecutive transmembrane segments (helical) span residues 324 to 344 (FLTMLGIIIGIIAVVFVIALG), 576 to 596 (IAFISLIVGGIGIMNIMLVSV), 626 to 646 (MVSLIGGCIGVGCALLFGGLF), and 659 to 679 (LSSFLIAFLCSSMIGIVFGYF).

Belongs to the ABC transporter superfamily. Macrolide exporter (TC 3.A.1.122) family. As to quaternary structure, homodimer. Part of the tripartite efflux system MacAB-TolC, which is composed of an inner membrane transporter, MacB, a periplasmic membrane fusion protein, MacA, and an outer membrane component, TolC. The complex forms a large protein conduit and can translocate molecules across both the inner and outer membranes. Interacts with MacA.

Its subcellular location is the cell inner membrane. Functionally, part of the tripartite efflux system MacAB-TolC. MacB is a non-canonical ABC transporter that contains transmembrane domains (TMD), which form a pore in the inner membrane, and an ATP-binding domain (NBD), which is responsible for energy generation. Confers resistance against macrolides. The sequence is that of Macrolide export ATP-binding/permease protein MacB from Haemophilus ducreyi (strain 35000HP / ATCC 700724).